Reading from the N-terminus, the 359-residue chain is 3-dehydroquinate synthase (359 aa).

NAD(+) is bound by residues 70 to 75, 104 to 108, 128 to 129, K141, and K150; these read DAEGGK, GAATD, and TT. Positions 183, 246, and 262 each coordinate Zn(2+).

This sequence belongs to the sugar phosphate cyclases superfamily. Dehydroquinate synthase family. The cofactor is Co(2+). Zn(2+) is required as a cofactor. It depends on NAD(+) as a cofactor.

It localises to the cytoplasm. The enzyme catalyses 7-phospho-2-dehydro-3-deoxy-D-arabino-heptonate = 3-dehydroquinate + phosphate. It functions in the pathway metabolic intermediate biosynthesis; chorismate biosynthesis; chorismate from D-erythrose 4-phosphate and phosphoenolpyruvate: step 2/7. In terms of biological role, catalyzes the conversion of 3-deoxy-D-arabino-heptulosonate 7-phosphate (DAHP) to dehydroquinate (DHQ). The polypeptide is 3-dehydroquinate synthase (Mycolicibacterium gilvum (strain PYR-GCK) (Mycobacterium gilvum (strain PYR-GCK))).